A 179-amino-acid polypeptide reads, in one-letter code: D-glycero-beta-D-manno-heptose-1,7-bisphosphate 7-phosphatase (179 aa).

Asp-7 functions as the Nucleophile in the catalytic mechanism. 2 residues coordinate Mg(2+): Asp-7 and Asp-9. Substrate is bound at residue Asp-7. Asp-9 (proton donor) is an active-site residue. Residues 15 to 19, 50 to 53, and Arg-57 each bind substrate; these read DSDAF and TNQS. Zn(2+)-binding residues include Cys-89, His-91, Cys-97, and Cys-99. Arg-100 is a binding site for substrate. A Mg(2+)-binding site is contributed by Asp-126. Substrate is bound at residue Arg-129.

As to quaternary structure, monomer. Requires Mg(2+) as cofactor. Zn(2+) is required as a cofactor.

It localises to the cytoplasm. It catalyses the reaction D-glycero-beta-D-manno-heptose 1,7-bisphosphate + H2O = D-glycero-beta-D-manno-heptose 1-phosphate + phosphate. The protein operates within nucleotide-sugar biosynthesis; ADP-L-glycero-beta-D-manno-heptose biosynthesis; ADP-L-glycero-beta-D-manno-heptose from D-glycero-beta-D-manno-heptose 7-phosphate: step 2/4. Its pathway is bacterial outer membrane biogenesis; LPS core biosynthesis. Its function is as follows. Converts the D-glycero-beta-D-manno-heptose 1,7-bisphosphate (beta-HBP) intermediate into D-glycero-beta-D-manno-heptose 1-phosphate by removing the phosphate group at the C-7 position. In Bordetella bronchiseptica (strain ATCC BAA-588 / NCTC 13252 / RB50) (Alcaligenes bronchisepticus), this protein is D-glycero-beta-D-manno-heptose-1,7-bisphosphate 7-phosphatase.